The following is a 430-amino-acid chain: Serine--tRNA ligase (430 aa).

Residue 237 to 239 (TAE) participates in L-serine binding. 268 to 270 (RSE) provides a ligand contact to ATP. L-serine is bound at residue glutamate 291. Residue 355–358 (EISS) participates in ATP binding. Residue serine 391 participates in L-serine binding.

Belongs to the class-II aminoacyl-tRNA synthetase family. Type-1 seryl-tRNA synthetase subfamily. As to quaternary structure, homodimer. The tRNA molecule binds across the dimer.

Its subcellular location is the cytoplasm. It carries out the reaction tRNA(Ser) + L-serine + ATP = L-seryl-tRNA(Ser) + AMP + diphosphate + H(+). It catalyses the reaction tRNA(Sec) + L-serine + ATP = L-seryl-tRNA(Sec) + AMP + diphosphate + H(+). It functions in the pathway aminoacyl-tRNA biosynthesis; selenocysteinyl-tRNA(Sec) biosynthesis; L-seryl-tRNA(Sec) from L-serine and tRNA(Sec): step 1/1. Functionally, catalyzes the attachment of serine to tRNA(Ser). Is also able to aminoacylate tRNA(Sec) with serine, to form the misacylated tRNA L-seryl-tRNA(Sec), which will be further converted into selenocysteinyl-tRNA(Sec). This Yersinia pseudotuberculosis serotype O:1b (strain IP 31758) protein is Serine--tRNA ligase.